The following is a 176-amino-acid chain: Large ribosomal subunit protein uL16 (176 aa).

This sequence belongs to the universal ribosomal protein uL16 family.

This is Large ribosomal subunit protein uL16 from Thermoplasma acidophilum (strain ATCC 25905 / DSM 1728 / JCM 9062 / NBRC 15155 / AMRC-C165).